Consider the following 1031-residue polypeptide: Translation initiation factor IF-2 (1031 aa).

2 disordered regions span residues 33–369 (KSHS…GDVL) and 388–436 (LKPL…AESL). Residues 45 to 56 (ELVRSKLSEPRV) show a composition bias toward basic and acidic residues. Over residues 96–105 (PAPAQQQAAA) the composition is skewed to low complexity. The segment covering 108–123 (ASSSKPSPQRPDQLSS) has biased composition (polar residues). Residues 148–171 (PAAQEPQPAAASTRPEAAAKAGSP) show a composition bias toward low complexity. Residues 184 to 200 (VLPPPRRAASGPEPPQR) show a composition bias toward pro residues. Basic and acidic residues predominate over residues 250–281 (TRPEPRSPVAKKEESSDSGKADEAPRPQRRLE). Positions 286-299 (PTRPVAKPLPPEPD) are enriched in pro residues. Residues 419–435 (RPSASAEATAPEAAAES) are compositionally biased toward low complexity. One can recognise a tr-type G domain in the interval 522–695 (PRPPVVTIMG…LLVADVAELQ (174 aa)). Residues 531–538 (GHVDHGKT) form a G1 region. 531-538 (GHVDHGKT) lines the GTP pocket. The segment at 556 to 560 (GITQR) is G2. The G3 stretch occupies residues 581–584 (DTPG). GTP is bound by residues 581–585 (DTPGH) and 635–638 (NKID). The interval 635-638 (NKID) is G4. The segment at 671–673 (SAL) is G5.

This sequence belongs to the TRAFAC class translation factor GTPase superfamily. Classic translation factor GTPase family. IF-2 subfamily.

It is found in the cytoplasm. One of the essential components for the initiation of protein synthesis. Protects formylmethionyl-tRNA from spontaneous hydrolysis and promotes its binding to the 30S ribosomal subunits. Also involved in the hydrolysis of GTP during the formation of the 70S ribosomal complex. This chain is Translation initiation factor IF-2, found in Synechococcus sp. (strain JA-3-3Ab) (Cyanobacteria bacterium Yellowstone A-Prime).